Reading from the N-terminus, the 663-residue chain is Protein-arginine deiminase type-4 (663 aa).

8 residues coordinate Ca(2+): Asn-153, Asp-155, Asp-157, Asp-165, Asp-168, Glu-170, Asp-176, and Asp-179. Arg-205, Arg-212, and Arg-218 each carry citrulline. Gln-349 contacts Ca(2+). Asp-350 is a catalytic residue. Ca(2+)-binding residues include Glu-351, Glu-353, Asp-369, and Ser-370. The residue at position 372 (Arg-372) is a Citrulline. Residue Asn-373 coordinates Ca(2+). Citrulline is present on residues Arg-374 and Arg-383. Arg-374 contacts substrate. Ca(2+) contacts are provided by Asp-388, Phe-407, Leu-410, and Glu-411. Active-site residues include His-471 and Asp-473. Arg-639 is a binding site for substrate. The active site involves Cys-645.

The protein belongs to the protein arginine deiminase family. Requires Ca(2+) as cofactor. Autocitrullination at Arg-372 and Arg-374 inactivates the enzyme. As to expression, expressed in eosinophils and neutrophils, not expressed in peripheral monocytes or lymphocytes.

Its subcellular location is the cytoplasm. It localises to the nucleus. The protein resides in the cytoplasmic granule. It carries out the reaction L-arginyl-[protein] + H2O = L-citrullyl-[protein] + NH4(+). Strongly Inhibited by F-amidine and N-alpha-benzoyl-N5-(2-chloro-1-iminoethyl)-L-ornithine amide (Cl-amidine). These inhibitors are however not specific to PADI4 and also inhibit other members of the family. Incorporation of a carboxylate ortho to the backbone amide of Cl-amidine results in inhibitors with increased specificity for PADI4: N-alpha-(2-carboxyl)benzoyl-N(5)-(2-fluoro-1-iminoethyl)-L-ornithine amide (o-F-amidine) and N-alpha-(2-carboxyl)benzoyl-N(5)-(2-chloro-1-iminoethyl)-L-ornithine amide (o-Cl-amidine). Strongly and specifically inhibited by Thr-Asp-F-amidine (TDFA); other members of the family are not inhibited. Functionally, catalyzes the citrullination/deimination of arginine residues of proteins such as histones, thereby playing a key role in histone code and regulation of stem cell maintenance. Citrullinates histone H1 at 'Arg-54' (to form H1R54ci), histone H3 at 'Arg-2', 'Arg-8', 'Arg-17' and/or 'Arg-26' (to form H3R2ci, H3R8ci, H3R17ci, H3R26ci, respectively) and histone H4 at 'Arg-3' (to form H4R3ci). Acts as a key regulator of stem cell maintenance by mediating citrullination of histone H1: citrullination of 'Arg-54' of histone H1 (H1R54ci) results in H1 displacement from chromatin and global chromatin decondensation, thereby promoting pluripotency and stem cell maintenance. Promotes profound chromatin decondensation during the innate immune response to infection in neutrophils by mediating formation of H1R54ci. Required for the formation of neutrophil extracellular traps (NETs); NETs are mainly composed of DNA fibers and are released by neutrophils to bind pathogens during inflammation. Citrullination of histone H3 prevents their methylation by CARM1 and HRMT1L2/PRMT1 and represses transcription. Citrullinates EP300/P300 at 'Arg-2142', which favors its interaction with NCOA2/GRIP1. The chain is Protein-arginine deiminase type-4 (PADI4) from Homo sapiens (Human).